Reading from the N-terminus, the 82-residue chain is Cytochrome b-c1 complex subunit 8 (82 aa).

Topologically, residues 1–39 are mitochondrial matrix; it reads MGREFGNLTRMRHVISYSLSPFEQRAHPHVFTKGIPNVL. At Ser-16 the chain carries Phosphoserine. Lys-33 is subject to N6-acetyllysine; alternate. N6-succinyllysine; alternate is present on Lys-33. A helical membrane pass occupies residues 40–68; it reads RRFRESFFRVAPQFVVFYLIYTWGTEEFE. The Mitochondrial intermembrane segment spans residues 69 to 82; sequence RSKRKNPAAYENDK.

The protein belongs to the UQCRQ/QCR8 family. As to quaternary structure, component of the ubiquinol-cytochrome c oxidoreductase (cytochrome b-c1 complex, complex III, CIII), a multisubunit enzyme composed of 11 subunits. The complex is composed of 3 respiratory subunits cytochrome b, cytochrome c1 and Rieske protein UQCRFS1, 2 core protein subunits UQCRC1/QCR1 and UQCRC2/QCR2, and 6 low-molecular weight protein subunits UQCRH/QCR6, UQCRB/QCR7, UQCRQ/QCR8, UQCR10/QCR9, UQCR11/QCR10 and subunit 9, the cleavage product of Rieske protein UQCRFS1. The complex exists as an obligatory dimer and forms supercomplexes (SCs) in the inner mitochondrial membrane with NADH-ubiquinone oxidoreductase (complex I, CI) and cytochrome c oxidase (complex IV, CIV), resulting in different assemblies (supercomplex SCI(1)III(2)IV(1) and megacomplex MCI(2)III(2)IV(2)). Interacts with UQCC6.

It localises to the mitochondrion inner membrane. In terms of biological role, component of the ubiquinol-cytochrome c oxidoreductase, a multisubunit transmembrane complex that is part of the mitochondrial electron transport chain which drives oxidative phosphorylation. The respiratory chain contains 3 multisubunit complexes succinate dehydrogenase (complex II, CII), ubiquinol-cytochrome c oxidoreductase (cytochrome b-c1 complex, complex III, CIII) and cytochrome c oxidase (complex IV, CIV), that cooperate to transfer electrons derived from NADH and succinate to molecular oxygen, creating an electrochemical gradient over the inner membrane that drives transmembrane transport and the ATP synthase. The cytochrome b-c1 complex catalyzes electron transfer from ubiquinol to cytochrome c, linking this redox reaction to translocation of protons across the mitochondrial inner membrane, with protons being carried across the membrane as hydrogens on the quinol. In the process called Q cycle, 2 protons are consumed from the matrix, 4 protons are released into the intermembrane space and 2 electrons are passed to cytochrome c. This is Cytochrome b-c1 complex subunit 8 (UQCRQ) from Pongo abelii (Sumatran orangutan).